The following is a 101-amino-acid chain: Apolipoprotein C-II (101 aa).

The signal sequence occupies residues 1-17; the sequence is MGTRFLLALCLVLLVLG. Positions 66-74 are lipid binding; that stretch reads AVDEKLRDL. Positions 78 to 101 are lipoprotein lipase cofactor; sequence STAAMSTYTGIFTDQVLSVLKGEE.

Belongs to the apolipoprotein C2 family. In terms of processing, proapolipoprotein C-II is synthesized as a sialic acid containing glycoprotein which is subsequently desialylated prior to its proteolytic processing. Proapolipoprotein C-II, the major form found in plasma undergoes proteolytic cleavage of its N-terminal hexapeptide to generate apolipoprotein C-II, which occurs as the minor form in plasma.

The protein localises to the secreted. Its function is as follows. Component of chylomicrons, very low-density lipoproteins (VLDL), low-density lipoproteins (LDL), and high-density lipoproteins (HDL) in plasma. Plays an important role in lipoprotein metabolism as an activator of lipoprotein lipase. Both proapolipoprotein C-II and apolipoprotein C-II can activate lipoprotein lipase. This chain is Apolipoprotein C-II (APOC2), found in Chlorocebus sabaeus (Green monkey).